A 729-amino-acid chain; its full sequence is Catalase-peroxidase (729 aa).

A disordered region spans residues 1–33 (MSAHNTNESAVGKCPFHEQKEEKSVLARGAGGG). Residues 15-25 (PFHEQKEEKSV) show a composition bias toward basic and acidic residues. Residues 108 to 229 (WHSAGTYRTV…LGATEMGLIY (122 aa)) constitute a cross-link (tryptophyl-tyrosyl-methioninium (Trp-Tyr) (with M-255)). Residue His-109 is the Proton acceptor of the active site. Residues 229 to 255 (YVNPEGPEASGNPASAAPAIRATFGNM) constitute a cross-link (tryptophyl-tyrosyl-methioninium (Tyr-Met) (with W-108)). His-270 provides a ligand contact to heme b.

It belongs to the peroxidase family. Peroxidase/catalase subfamily. In terms of assembly, homodimer or homotetramer. Requires heme b as cofactor. Post-translationally, formation of the three residue Trp-Tyr-Met cross-link is important for the catalase, but not the peroxidase activity of the enzyme.

The catalysed reaction is H2O2 + AH2 = A + 2 H2O. The enzyme catalyses 2 H2O2 = O2 + 2 H2O. Bifunctional enzyme with both catalase and broad-spectrum peroxidase activity. This chain is Catalase-peroxidase, found in Erwinia tasmaniensis (strain DSM 17950 / CFBP 7177 / CIP 109463 / NCPPB 4357 / Et1/99).